The following is a 135-amino-acid chain: Large ribosomal subunit protein eL32 (135 aa).

Belongs to the eukaryotic ribosomal protein eL32 family. In terms of assembly, component of the large ribosomal subunit.

The protein localises to the cytoplasm. Component of the large ribosomal subunit. The ribosome is a large ribonucleoprotein complex responsible for the synthesis of proteins in the cell. The polypeptide is Large ribosomal subunit protein eL32 (rpl32) (Ictalurus punctatus (Channel catfish)).